We begin with the raw amino-acid sequence, 866 residues long: Putative linoleate 9S-lipoxygenase 3 (866 aa).

Residues 33 to 161 enclose the PLAT domain; the sequence is NDFGATVIDG…KYRYDRVFFA (129 aa). One can recognise a Lipoxygenase domain in the interval 164–866; it reads AYLPSQMPAA…AKGIPNSISI (703 aa). Residues 206-250 form a disordered region; that stretch reads YNDLGSPDSGNPRPILGGSPDTPYPRRGRTGRKPTTTDPDSESRL. Positions 521, 526, 712, 716, and 866 each coordinate Fe cation.

Belongs to the lipoxygenase family. Requires Fe cation as cofactor.

The enzyme catalyses (9Z,12Z)-octadecadienoate + O2 = (9S)-hydroperoxy-(10E,12Z)-octadecadienoate. Its pathway is lipid metabolism; oxylipin biosynthesis. Plant lipoxygenase may be involved in a number of diverse aspects of plant physiology including growth and development, pest resistance, and senescence or responses to wounding. Catalyzes the hydroperoxidation of lipids containing a cis,cis-1,4-pentadiene structure. This Oryza sativa subsp. japonica (Rice) protein is Putative linoleate 9S-lipoxygenase 3.